Here is a 539-residue protein sequence, read N- to C-terminus: Phosphoenolpyruvate carboxykinase (ATP) (539 aa).

Substrate-binding residues include R64, Y206, and K212. ATP is bound by residues K212, H231, and 247–255 (GLSGTGKTT). Mn(2+)-binding residues include K212 and H231. D268 provides a ligand contact to Mn(2+). ATP-binding positions include E296, R332, 448-449 (RI), and T454. Residue R332 participates in substrate binding.

It belongs to the phosphoenolpyruvate carboxykinase (ATP) family. As to quaternary structure, monomer. It depends on Mn(2+) as a cofactor.

The protein resides in the cytoplasm. The catalysed reaction is oxaloacetate + ATP = phosphoenolpyruvate + ADP + CO2. The protein operates within carbohydrate biosynthesis; gluconeogenesis. In terms of biological role, involved in the gluconeogenesis. Catalyzes the conversion of oxaloacetate (OAA) to phosphoenolpyruvate (PEP) through direct phosphoryl transfer between the nucleoside triphosphate and OAA. In Salmonella choleraesuis (strain SC-B67), this protein is Phosphoenolpyruvate carboxykinase (ATP).